The chain runs to 85 residues: Putative membrane protein insertion efficiency factor (85 aa).

It belongs to the UPF0161 family.

The protein resides in the cell inner membrane. In terms of biological role, could be involved in insertion of integral membrane proteins into the membrane. The protein is Putative membrane protein insertion efficiency factor of Vibrio atlanticus (strain LGP32) (Vibrio splendidus (strain Mel32)).